Consider the following 94-residue polypeptide: Small ribosomal subunit protein uS19 (94 aa).

Belongs to the universal ribosomal protein uS19 family.

Its function is as follows. Protein S19 forms a complex with S13 that binds strongly to the 16S ribosomal RNA. In Natranaerobius thermophilus (strain ATCC BAA-1301 / DSM 18059 / JW/NM-WN-LF), this protein is Small ribosomal subunit protein uS19.